Consider the following 315-residue polypeptide: Lipoyl synthase (315 aa).

A disordered region spans residues Met1–Pro33. The span at Arg9–Arg29 shows a compositional bias: basic and acidic residues. Cys54, Cys59, Cys65, Cys80, Cys84, Cys87, and Ser294 together coordinate [4Fe-4S] cluster. A Radical SAM core domain is found at Trp66 to Leu283.

Belongs to the radical SAM superfamily. Lipoyl synthase family. Requires [4Fe-4S] cluster as cofactor.

The protein resides in the cytoplasm. The catalysed reaction is [[Fe-S] cluster scaffold protein carrying a second [4Fe-4S](2+) cluster] + N(6)-octanoyl-L-lysyl-[protein] + 2 oxidized [2Fe-2S]-[ferredoxin] + 2 S-adenosyl-L-methionine + 4 H(+) = [[Fe-S] cluster scaffold protein] + N(6)-[(R)-dihydrolipoyl]-L-lysyl-[protein] + 4 Fe(3+) + 2 hydrogen sulfide + 2 5'-deoxyadenosine + 2 L-methionine + 2 reduced [2Fe-2S]-[ferredoxin]. Its pathway is protein modification; protein lipoylation via endogenous pathway; protein N(6)-(lipoyl)lysine from octanoyl-[acyl-carrier-protein]: step 2/2. Its function is as follows. Catalyzes the radical-mediated insertion of two sulfur atoms into the C-6 and C-8 positions of the octanoyl moiety bound to the lipoyl domains of lipoate-dependent enzymes, thereby converting the octanoylated domains into lipoylated derivatives. The protein is Lipoyl synthase of Paracoccus denitrificans (strain Pd 1222).